A 144-amino-acid chain; its full sequence is Glutamyl-tRNA(Gln) amidotransferase subunit C, mitochondrial (144 aa).

Residues 1-17 (MFRRSVSFVRSHVLRSF) constitute a mitochondrion transit peptide.

This sequence belongs to the GatC family. In terms of assembly, subunit of the heterotrimeric GatCAB amidotransferase (AdT) complex, composed of A, B and C subunits.

It localises to the mitochondrion. It catalyses the reaction L-glutamyl-tRNA(Gln) + L-glutamine + ATP + H2O = L-glutaminyl-tRNA(Gln) + L-glutamate + ADP + phosphate + H(+). Functionally, allows the formation of correctly charged Gln-tRNA(Gln) through the transamidation of misacylated Glu-tRNA(Gln) in the mitochondria. The reaction takes place in the presence of glutamine and ATP through an activated gamma-phospho-Glu-tRNA(Gln). The protein is Glutamyl-tRNA(Gln) amidotransferase subunit C, mitochondrial of Ixodes scapularis (Black-legged tick).